The primary structure comprises 224 residues: 7-cyano-7-deazaguanine synthase (224 aa).

L12–T22 contacts ATP. Residues C193, C201, C204, and C207 each coordinate Zn(2+).

It belongs to the QueC family. Requires Zn(2+) as cofactor.

The enzyme catalyses 7-carboxy-7-deazaguanine + NH4(+) + ATP = 7-cyano-7-deazaguanine + ADP + phosphate + H2O + H(+). It participates in purine metabolism; 7-cyano-7-deazaguanine biosynthesis. Its function is as follows. Catalyzes the ATP-dependent conversion of 7-carboxy-7-deazaguanine (CDG) to 7-cyano-7-deazaguanine (preQ(0)). This is 7-cyano-7-deazaguanine synthase from Prochlorococcus marinus (strain MIT 9215).